The primary structure comprises 696 residues: Transcriptional activator of proteases prtT (696 aa).

Residues 106 to 126 (DVADGSGRPESSTSGDTIRPK) form a disordered region. Residues 136–165 (CNTCRKLKTRCDLDPRGHACRRCLSLRIEC) constitute a DNA-binding region (zn(2)-C6 fungal-type).

It belongs to the prtT family.

Its subcellular location is the nucleus. Functionally, transcription factor required for protein utilization and degradation. Regulates transcription of major secreted proteases including a serine alkaline protease (alk1), a metalloprotease (mep), an aspergillopepsin (pep1), a sedolisin (sed2) and two dipeptidyl-peptidases (dppIV and dppV). However, it is not a virulence determinant in leukopenic mice. The chain is Transcriptional activator of proteases prtT (prtT) from Aspergillus fumigatus (strain ATCC MYA-4609 / CBS 101355 / FGSC A1100 / Af293) (Neosartorya fumigata).